The chain runs to 569 residues: 3-(3-hydroxy-phenyl)propionate/3-hydroxycinnamic acid hydroxylase (569 aa).

Residues 8-37 and 273-283 each bind FAD; these read DVVIVGAGPAGLTLANILGLEGVRVLVVDE and FREGRLMLAGD.

This sequence belongs to the PheA/TfdB FAD monooxygenase family. FAD is required as a cofactor.

It carries out the reaction 3-(3-hydroxyphenyl)propanoate + NADH + O2 + H(+) = 3-(2,3-dihydroxyphenyl)propanoate + NAD(+) + H2O. The enzyme catalyses (2E)-3-(3-hydroxyphenyl)prop-2-enoate + NADH + O2 + H(+) = (2E)-3-(2,3-dihydroxyphenyl)prop-2-enoate + NAD(+) + H2O. Its pathway is aromatic compound metabolism; 3-phenylpropanoate degradation. Its function is as follows. Catalyzes the insertion of one atom of molecular oxygen into position 2 of the phenyl ring of 3-(3-hydroxyphenyl)propionate (3-HPP) and hydroxycinnamic acid (3HCI). The sequence is that of 3-(3-hydroxy-phenyl)propionate/3-hydroxycinnamic acid hydroxylase from Mycolicibacterium gilvum (strain PYR-GCK) (Mycobacterium gilvum (strain PYR-GCK)).